The chain runs to 279 residues: uncharacterized protein (279 aa).

Disordered stretches follow at residues 50–109 (YTYN…YNKN) and 249–279 (SQSQPSSFSSSSSSSSIQLSPSPSSSSSPKL). The span at 68-109 (NNNSNYNNNNNNNNNNNNNNNNNNNNNNNKNNNNNNYNYNKN) shows a compositional bias: low complexity.

This is an uncharacterized protein from Dictyostelium discoideum (Social amoeba).